The primary structure comprises 307 residues: Ornithine carbamoyltransferase (307 aa).

Carbamoyl phosphate-binding positions include 50 to 53, Q77, R101, and 128 to 131; these read STRT and HPCQ. L-ornithine is bound by residues N160, D224, and 228 to 229; that span reads SM. Residues 264-265 and R292 contribute to the carbamoyl phosphate site; that span reads CL.

The protein belongs to the aspartate/ornithine carbamoyltransferase superfamily. OTCase family.

It localises to the cytoplasm. It catalyses the reaction carbamoyl phosphate + L-ornithine = L-citrulline + phosphate + H(+). It functions in the pathway amino-acid biosynthesis; L-arginine biosynthesis; L-arginine from L-ornithine and carbamoyl phosphate: step 1/3. With respect to regulation, inhibited by arginine, norvaline. Reversibly catalyzes the transfer of the carbamoyl group from carbamoyl phosphate (CP) to the N(epsilon) atom of ornithine (ORN) to produce L-citrulline, which is a substrate for argininosuccinate synthetase, the enzyme involved in the final step in arginine biosynthesis. The chain is Ornithine carbamoyltransferase from Mycolicibacterium smegmatis (strain ATCC 700084 / mc(2)155) (Mycobacterium smegmatis).